An 875-amino-acid polypeptide reads, in one-letter code: MSLERTVVMLNEDDTQGRPLADLVKEAAKSIAPLWPISSFIARHPWMGLEGELFADAADRWQQVYGIDLYPPMTVFYTALKKGEIDPVFVERRLQSWLDKQSLPVPRHEAERLCRSFLWNDTVPEEAFSLPEMAQLAEGTQLRPMAVQPISKRLDQIAKRLDQQMIKWCKLFYDESGGTWTLPQREQGFYQAWRQLVVTDPSLSKDERKRFSGWPHDKHEALNYALEKLGIRDEDVVAYLEAHLLALPGWAGMAVWRSHRAGDEVGGLIDYLAVRLSIEWVLTAPHLPLHGEENGERRDVLPLLAAWFYWTGMTPEDWRRLRTNEQQARLAFADRFWRIDRHHLWLEAWEDTDEAKLKEAVSTRHRMSEPEQVAAQLLFCIDVRSEPFRRHLEAAGPFETYGCAGFFGLPIQTRVLDSEDVHPSCPAIVDPRHEIREVAPPEEVEPYRFRRDMFRFVSKTFKKMKQHVLAGLLLPEMSGPWLGLHTLARSAAPAWAGQVIRYTKKSVEQKPKTTLSLHYHEGDETTGLPIGLTNEEQVEYVKQLLVTIGLTSSFAPLVVVCGHGSETTNNPYASALDCGACGGVAGAFNARVFAALANLPSVRAELAKEGIVIPDETVFVAAEHITTVDELRWLEVPPLSEAAQQSFDRLKQALHDVSRQANAERMMKLPHVGGKPRDPVAEAQRRAVDWSEIRPEWGLAGNTAFFIGRRALTKGVHLDGRVFLHSYDWRDDPTGEALARIIAGPATVGQWINLQYYASTVAPHYYGSGDKTTQTVTGGIGVMQGNGSDLLAGLPWQSVVSSDRELFHFPLRLLVIIEAPSYYIERLLNENSEFRRKVENGWLRLSSIDPNSGAWMKWGDTHSLSVWSREMGIGK.

Positions 380, 382, 563, and 578 each coordinate Zn(2+).

Belongs to the inorganic carbon transporter (TC 9.A.2) DabA family. As to quaternary structure, forms a complex with DabB. Zn(2+) is required as a cofactor.

It is found in the cell membrane. Part of an energy-coupled inorganic carbon pump. The sequence is that of Probable inorganic carbon transporter subunit DabA from Geobacillus thermodenitrificans (strain NG80-2).